Consider the following 674-residue polypeptide: Glutaminase kidney isoform, mitochondrial (674 aa).

The N-terminal 54 residues, 1-54, are a transit peptide targeting the mitochondrion; the sequence is MMRLRGSAMLRELLLRPPAAVGGVLRRTQPLGTLCRRPRGGSRPAAGLVAAARL. The disordered stretch occupies residues 56–123; it reads PWWGGGGRAK…PGETDAFGNS (68 aa). Gly residues predominate over residues 58–71; sequence WGGGGRAKGPGSGG. Low complexity predominate over residues 89-101; it reads PPQQQQQQQQQPG. 2 positions are modified to N6-succinyllysine: Lys-135 and Lys-169. Ser-291 serves as a coordination point for substrate. Position 316 is an N6-acetyllysine (Lys-316). Positions 320–327 are highly mobile activation loop; that stretch reads GLRFNKLF. Substrate contacts are provided by Asn-340, Glu-386, Asn-393, Tyr-419, Tyr-471, and Val-489. ANK repeat units lie at residues 590–619 and 624–653; these read DSRT…VNPF and WNNT…QYTP. The segment at 652–674 is disordered; sequence TPQGDSDDGKENQTVHKNLDGLL. Ser-657 is subject to Phosphoserine. The segment covering 658–674 has biased composition (basic and acidic residues); the sequence is DDGKENQTVHKNLDGLL.

This sequence belongs to the glutaminase family. Homotetramer, dimer of dimers. Tetramer composed of 68 and 65 kDa peptides in a 1:3 ratio. Can assemble into higher oligomers (in vitro), but the physiological significance of this is not clear. Interacts with RAF1 and MAP2K2. Interacts with ATCAY; the interaction is direct and may control GLS localization, negatively regulating its activity. Post-translationally, synthesized as a 74-kDa cytosolic precursor which is proteolytically processed by the mitochondrial-processing peptidase (MPP) via a 72-kDa intermediate to yield the mature mitochondrial 68- and 65-kDa subunits. Kidney, brain, and intestine.

The protein resides in the mitochondrion. It localises to the cytoplasm. Its subcellular location is the cytosol. The protein localises to the mitochondrion matrix. The enzyme catalyses L-glutamine + H2O = L-glutamate + NH4(+). With respect to regulation, enzyme activity is increased by phosphate, due to increased kcat and increased substrate affinity. Its function is as follows. Catalyzes the first reaction in the primary pathway for the renal catabolism of glutamine. Plays a role in maintaining acid-base homeostasis. Regulates the levels of the neurotransmitter glutamate, the main excitatory neurotransmitter in the brain. In Rattus norvegicus (Rat), this protein is Glutaminase kidney isoform, mitochondrial (Gls).